The chain runs to 119 residues: Enhancer of yellow 2 transcription factor (119 aa).

The interval 93–119 (LTENETEGTDNHDDDEDDEDENGTEDN) is disordered. Residues 96-119 (NETEGTDNHDDDEDDEDENGTEDN) show a composition bias toward acidic residues.

This sequence belongs to the ENY2 family. Component of the nuclear pore complex (NPC)-associated AMEX complex (anchoring and mRNA export complex), composed of at least e(y)2 and xmas-2. Component of the SAGA transcription coactivator-HAT complexes, at least composed of Ada2b, e(y)2, Pcaf/Gcn5, Taf10 and Nipped-A/Trrap. Within the SAGA complex, e(y)2, Sgf11, and not/nonstop form an additional subcomplex of SAGA called the DUB module (deubiquitination module). Component of the THO complex, composed of at least e(y)2, HPR1, THO2, THOC5, THOC6 and THOC7. Interacts with e(y)1. Interacts with su(Hw) (via zinc fingers). Interacts with xmas-2; required for localization to the nuclear periphery. Interacts with the nuclear pore complex (NPC).

The protein resides in the nucleus. It is found in the nucleoplasm. The protein localises to the cytoplasm. In terms of biological role, involved in mRNA export coupled transcription activation by association with both the AMEX and the SAGA complexes. The SAGA complex is a multiprotein complex that activates transcription by remodeling chromatin and mediating histone acetylation and deubiquitination. Within the SAGA complex, participates in a subcomplex that specifically deubiquitinates histone H2B. The SAGA complex is recruited to specific gene promoters by activators, where it is required for transcription. Required for nuclear receptor-mediated transactivation. Involved in transcription elongation by recruiting the THO complex onto nascent mRNA. The AMEX complex functions in docking export-competent ribonucleoprotein particles (mRNPs) to the nuclear entrance of the nuclear pore complex (nuclear basket). AMEX participates in mRNA export and accurate chromatin positioning in the nucleus by tethering genes to the nuclear periphery. The protein is Enhancer of yellow 2 transcription factor of Drosophila willistoni (Fruit fly).